Reading from the N-terminus, the 2282-residue chain is MIEINEYIKKLGGDKNIEKILIANNGIAAVKAIRSVRKWAYTNFGNERAIKFVVMATPEDMKANAEYIRMADQILQVPGGSNNNNYANVDIIVDFAERAGVQAVWAGWGHASENPRLPDLLSKTETGIVFIGPPAKAMADLGDKIASTIVAQSARVACVPWSGSGLKVDYSECNGVPSEIYGRACINSVEEARECAQRVGFPAMIKASEGGGGKGIRKVTSMEDLESSFRQVQNEVPGSPIFFMKLVSNARHLEVQIVADRHGEAISLNGRDCSVQRRHQKIIEEGPAIAPTPQVWEEMERAAVRLVKEVGYVGAGTVEYLFAEGEYYFLELNPRLQVEHPVTEQITGVNLPATQLQIAMGIPLHRIPDIRKLYGRTGDDLYGDSMIDLHDFTKRNPPAGHCIAVRITGENPDEGFKPTSGQIHELTFRSTPNIWGYFSVGAKGGLHEYADSQFGHIFANGATREEARKTIILGLKEISIRGDIRTPVEYIIHLLESKDFKENHIHTGWLDQLISEKIQTKKPETMIVVLCGAIYKASTIFSTKIQEFSNQLSNGQLPSLELLNNSLPIELIYNNVKYQFEVSRTGINNYSVCLKNDKSAVSIDSSVIMLSDSGLLILLNGSTHVCYGREDVIGLSLMIDSKTCVFSQEYDPSILRTSSPGKLVRYLVDDGSLVVKGTPFAEIEVMKMYMPLLVPEKGIIKFVLTEGSVMAPGAIIANLELSDQSSIQKSTVFTGSLTKMSPPTLIGNKPHQLLNYTLGKISNVLCGYESNDLNQLLNDTIKQLSNQKLPLFEFKEQLSIVQSRIPQSLFKLINDELNKFEFNNDDDDEDDSELFNSKNLQLSISLYLNKLLLENEQLSIAIQLLIKPIILLAEKYNDGVSFAAINIFKNYLEEFIQIETNLQNKNIQTVLKSIRPTYKDNISKVVDIAQSLHPQSKKYKFILLLLNKIQEQGLVCDFVEQFKKLSSLGGNCMEISLKAKHIMVHSQLPSNKQRSNDLINSLKSILNVNNEQQQQVDEKVQDNKDEKISKLSKQTNEISDILIPMFFNESNNDDDIRKLAMEVYVRHSYRSYYVEDTKVTLSNDEGSSGFSFIEWHFYINLPQQSNLGGSNSGSPTYGSPLIRSISSSGGSSGGSGFQISPRPSMSIFNGLSMLRTDSTDSLTAMEDQTKLRYGMMVFFENEKKFEEKLPLILTRYNEENNKKSQLSLSPNESTDILSVIISIYPESISQENQAISSFQSILKGYIKELSIARIRRITFICCGGDEGKPLKYFTFRERHMYMEDPIFRHIEPAMAYHLEVRKLSNFDITHVPTTSQRIHLYYAQEKGKKETDPDADRSFFVRSVIRYSDLYGHSNEIKVDILLSQIETLLSESIESLEIAMSNKKYEKAQNHSIFLNVMPEVMFDEKMIGYVVQEIGDRLGKRLWKLRVGRVEVRGRIRKGDGLIPVRFFVQNPTGYAFQVQCYYEQQNSIGQMVFAVVPGSSKGSWEGLPVDTPYPIMDAVQRNRFKAQRLDTTYCYDYPDLFREAMQNIWMEFMESNKTNPVKVYPSSRGVLESVELILPSTINTDFPPSIPLDQLPEESKPKLEETYRPIGYNDIGMVAWRMTFYTPEYPLGRQAIVIANDITHQIGSFGPQEDMLFKLASELARKEKIPRIYLSSNSGARIGLADEIKSKFKVTWNVPSDPTKGIKNLYLTNNDYQALKDSVIAYQDTTDKDKWIIHDIIGQKNGIGVENLSWSGLIAGETSQAYNEIFTITLVSGRSVGIGAYLVRLGQRTIQNDAPIILTGASALNKVLGKEVYESNQQLGGSQIMYPNGVSHIIVNDELRGITNVLQWLSFVPKSGGEMVPIISPIDSPHRDIEFDPSNSINGKCDTRHLIAGLQSELDPNYWISGMFDKDSFMETLAGWANTVITGRARLGGIPVGIIAVETKSVEKIIPADPANPLSYEQVNTQAGQVWYPDSSFKTAQAIADFNNGEELPLMILANWRGFSGGMRDMFDEILKFGSMIVDNLRNYKQPVMVYIPPFAELRGGAWVVLDSTINLDMMEMYCSEEGRGGVLEPNGIAEIKYRDPELIKTMHRLDPKLIEWDKSIPIGVSVNGLDQSQKTIKSQIQQREKELLGIYQQIAIKFADLHDTPGRMKAKGVIKQMVPWKSARSFFYDRIKRRLFEEDKLKLIDKSHPGLNRQSKLNLLETWIKQILGNNQSVDYHQNDKLISSTIESNSHIINDKIIDLSKQYAINQILNFVQSDSESIVDGFQNLLPFISTQQKEFLFESLKKDLNK.

The region spanning 16-515 (NIEKILIANN…HTGWLDQLIS (500 aa)) is the Biotin carboxylation domain. The ATP-grasp domain maps to 170–360 (YSECNGVPSE…LPATQLQIAM (191 aa)). 196 to 253 (AQRVGFPAMIKASEGGGGKGIRKVTSMEDLESSFRQVQNEVPGSPIFFMKLVSNARHL) serves as a coordination point for ATP. Positions 319, 331, and 333 each coordinate Mn(2+). Arginine 335 is an active-site residue. Residues 646–720 (FSQEYDPSIL…APGAIIANLE (75 aa)) form the Biotinyl-binding domain. Lysine 687 carries the post-translational modification N6-biotinyllysine. The segment covering 1109–1129 (GSNSGSPTYGSPLIRSISSSG) has biased composition (low complexity). The segment at 1109 to 1141 (GSNSGSPTYGSPLIRSISSSGGSSGGSGFQISP) is disordered. The CoA carboxyltransferase N-terminal domain maps to 1495-1851 (PYPIMDAVQR…SGGEMVPIIS (357 aa)). The segment at 1495–2178 (PYPIMDAVQR…EEDKLKLIDK (684 aa)) is carboxyltransferase. Positions 1761, 2068, and 2070 each coordinate CoA. Residues 1852 to 2178 (PIDSPHRDIE…EEDKLKLIDK (327 aa)) enclose the CoA carboxyltransferase C-terminal domain.

The cofactor is biotin. Mn(2+) is required as a cofactor.

It localises to the cytoplasm. It catalyses the reaction hydrogencarbonate + acetyl-CoA + ATP = malonyl-CoA + ADP + phosphate + H(+). The enzyme catalyses N(6)-biotinyl-L-lysyl-[protein] + hydrogencarbonate + ATP = N(6)-carboxybiotinyl-L-lysyl-[protein] + ADP + phosphate + H(+). It participates in lipid metabolism; malonyl-CoA biosynthesis; malonyl-CoA from acetyl-CoA: step 1/1. Its function is as follows. Catalyzes the rate-limiting reaction in the biogenesis of long-chain fatty acids. Carries out three functions: biotin carboxyl carrier protein, biotin carboxylase and carboxyltransferase. The polypeptide is Acetyl-CoA carboxylase (accA) (Dictyostelium discoideum (Social amoeba)).